We begin with the raw amino-acid sequence, 268 residues long: Small ribosomal subunit protein uS2 (268 aa).

The protein belongs to the universal ribosomal protein uS2 family.

In Coprothermobacter proteolyticus (strain ATCC 35245 / DSM 5265 / OCM 4 / BT), this protein is Small ribosomal subunit protein uS2.